A 174-amino-acid polypeptide reads, in one-letter code: uncharacterized protein (174 aa).

Residues 126 to 146 form a helical membrane-spanning segment; sequence AIDEFIITVIPVVLGSGIPLF.

It to B.subtilis YyaP.

It localises to the membrane. This is an uncharacterized protein from Bacillus subtilis (strain 168).